The following is a 238-amino-acid chain: Probable tetraspanin tspC (238 aa).

Topologically, residues 1 to 16 (MVNTRDFLPKTTHYLK) are cytoplasmic. Residues 17–37 (VPIIGLNAILWLLGLVLIVVG) traverse the membrane as a helical segment. The Extracellular portion of the chain corresponds to 38–69 (SVCISFFSNFKEFTKESGYKNALSNLTTSAPT). The N-linked (GlcNAc...) asparagine glycan is linked to N62. A helical transmembrane segment spans residues 70–90 (GVLVIGIFFILLTLVGCFVAY). Residues 91–93 (KEK) are Cytoplasmic-facing. Residues 94–114 (LVGLVLYTMLMLILLVVLIGI) form a helical membrane-spanning segment. Over 115 to 197 (GGKALTLDKE…GIFTKQVSSK (83 aa)) the chain is Extracellular. N-linked (GlcNAc...) asparagine glycosylation is found at N143 and N164. The helical transmembrane segment at 198 to 218 (LVLVGIAGVVIGCIEFVAMAL) threads the bilayer. Residues 219-238 (SLFLIIRICRSPRSRAYDQY) are Cytoplasmic-facing.

Belongs to the tetraspanin (TM4SF) family.

It localises to the membrane. This is Probable tetraspanin tspC (tspC) from Dictyostelium discoideum (Social amoeba).